The chain runs to 224 residues: Prolactin-2C3 (224 aa).

Positions 1 to 29 (MLPSSIQPCSWILLLLLVNSSLLWKNVAS) are cleaved as a signal peptide. Asn-19 carries an N-linked (GlcNAc...) asparagine glycan. An intrachain disulfide couples Cys-33 to Cys-40. N-linked (GlcNAc...) asparagine glycans are attached at residues Asn-57, Asn-75, and Asn-88. Disulfide bonds link Cys-87-Cys-199 and Cys-216-Cys-224.

The protein belongs to the somatotropin/prolactin family. Post-translationally, N-glycosylated and sialylated. As to expression, expressed in placenta and hair follicles, with highest expression levels detected in the outer root sheath and no expression detected in bulb. Expressed in placenta, skin wounds, keratinocytes and weakly in embryonic fibroblasts. Expressed in brain, cerebellum and in Neuro-2a cell line. Not detected in liver, kidney, ovary, pituitary gland and brain.

Its subcellular location is the secreted. The protein localises to the endoplasmic reticulum. Its function is as follows. May have a role in embryonic development. It is likely to provide a growth stimulus to target cells in maternal and fetal tissues during the development of the embryo at mid-gestation. May play a role during wound healing and in the hair follicle cycle as a growth factor and/or an angiogenesis factor. May play a role in microvilli formation and cell proliferation of neuroblastoma cells. This chain is Prolactin-2C3 (Prl2c3), found in Mus musculus (Mouse).